We begin with the raw amino-acid sequence, 196 residues long: Adenylate kinase (196 aa).

9 to 17 is an ATP binding site; the sequence is GIPGVGKST.

It belongs to the archaeal adenylate kinase family.

It localises to the cytoplasm. It catalyses the reaction AMP + ATP = 2 ADP. The polypeptide is Adenylate kinase (Thermococcus sibiricus (strain DSM 12597 / MM 739)).